A 618-amino-acid polypeptide reads, in one-letter code: DNA mismatch repair protein MutL (618 aa).

The segment covering 366–381 (AEPTAAREPATPRYSG) has biased composition (low complexity). Residues 366-403 (AEPTAAREPATPRYSGGASGGNGGRQSAGGWPHAQPGY) form a disordered region. Residues 382 to 392 (GASGGNGGRQS) show a composition bias toward gly residues.

Belongs to the DNA mismatch repair MutL/HexB family.

Its function is as follows. This protein is involved in the repair of mismatches in DNA. It is required for dam-dependent methyl-directed DNA mismatch repair. May act as a 'molecular matchmaker', a protein that promotes the formation of a stable complex between two or more DNA-binding proteins in an ATP-dependent manner without itself being part of a final effector complex. This is DNA mismatch repair protein MutL from Salmonella schwarzengrund (strain CVM19633).